The sequence spans 291 residues: MNSGYLHFPDFDPVIFSLGPVSLHWYGLMYLVGFVFAMWLAVRRANRPGSGWTKNEVENLLYAGFLGVFLGGRIGYVLFYNLPLFLENPLYLFRVWDGGMSFHGGLIGVICVMIWFAKRTKRNFFQVSDFIAPLIPFGLGAGRLGNFINGELWGRVDPGFPYAMLFPGSRSEDIGLLASHPEWQSLFNTYGVLPRHPSQLYELFLEGIVLFIILNLFIRKPRPMGAVSGLFLIGYGAFRIIVEFFRQPDAQFTGEWVQYISMGQILSIPMIVAGAAMMIWAYRRRPQQQLS.

7 helical membrane passes run 21 to 41 (VSLH…MWLA), 60 to 80 (LLYA…VLFY), 96 to 116 (WDGG…MIWF), 130 to 150 (FIAP…FING), 198 to 218 (SQLY…NLFI), 225 to 245 (GAVS…VEFF), and 260 to 280 (ISMG…MMIW). R143 contributes to the a 1,2-diacyl-sn-glycero-3-phospho-(1'-sn-glycerol) binding site.

The protein belongs to the Lgt family.

Its subcellular location is the cell inner membrane. It catalyses the reaction L-cysteinyl-[prolipoprotein] + a 1,2-diacyl-sn-glycero-3-phospho-(1'-sn-glycerol) = an S-1,2-diacyl-sn-glyceryl-L-cysteinyl-[prolipoprotein] + sn-glycerol 1-phosphate + H(+). The protein operates within protein modification; lipoprotein biosynthesis (diacylglyceryl transfer). Functionally, catalyzes the transfer of the diacylglyceryl group from phosphatidylglycerol to the sulfhydryl group of the N-terminal cysteine of a prolipoprotein, the first step in the formation of mature lipoproteins. In Cronobacter sakazakii (strain ATCC BAA-894) (Enterobacter sakazakii), this protein is Phosphatidylglycerol--prolipoprotein diacylglyceryl transferase.